The sequence spans 242 residues: Ribonuclease PH (242 aa).

Phosphate-binding positions include arginine 86 and glycine 124–arginine 126.

It belongs to the RNase PH family. As to quaternary structure, homohexameric ring arranged as a trimer of dimers.

It carries out the reaction tRNA(n+1) + phosphate = tRNA(n) + a ribonucleoside 5'-diphosphate. Phosphorolytic 3'-5' exoribonuclease that plays an important role in tRNA 3'-end maturation. Removes nucleotide residues following the 3'-CCA terminus of tRNAs; can also add nucleotides to the ends of RNA molecules by using nucleoside diphosphates as substrates, but this may not be physiologically important. Probably plays a role in initiation of 16S rRNA degradation (leading to ribosome degradation) during starvation. The sequence is that of Ribonuclease PH from Caulobacter sp. (strain K31).